The primary structure comprises 178 residues: Fatty-acid and retinol-binding protein 1 (178 aa).

Positions 1–16 (MYHRLILLALIGTTMA) are cleaved as a signal peptide. Coiled-coil stretches lie at residues 67-89 (DAAL…ELRN) and 130-153 (KQAA…ELKV).

Belongs to the fatty-acid and retinol-binding protein (FARBP) family. Post-translationally, not glycosylated.

It localises to the secreted. In terms of biological role, binds retinol and different fatty acids. The sequence is that of Fatty-acid and retinol-binding protein 1 from Wuchereria bancrofti.